A 514-amino-acid polypeptide reads, in one-letter code: MGAATKLAFAVFLISCSSAGSILGRSETKECIYYNANWEKDKTNSNGTEICYGDNDKRKHCFATWKNISGSIEIVKQGCWLDDINCYNKSKCTEKKDSPDVFFCCCEGNYCNEKFYHSPEMEVTQPTSNPVTTKPPLFNTLLYSLVPIMVVAVIVLFSFWMYRHHKLAYPPVLVPTQDPGPPPPSPLLGLKPLQLLEVKARGRFGCVWKAQLLNETVAVKIFPVQDKLSWQNEYEIYSLPGMKHENILYFIGAEKRGTNLDTDLWLITAFHEKGSLTDYLKANVVSWNELCLIAETMARGLSHLHEDIPGLKDGHKPAVAHRDIKSKNVLLKNNLTACIADFGLALKFEAGKSAGDTHGQVGTRRYMAPEVLEGAINFQRDAFLRIDMYAFGLVLWELASRCTASDGPVDEYMLPFEEEVGQHPSLEDMQEVVVHKKKRPILRECWQKHAGMAMLCETIEECWDHDAEARLSAGCVEERIIQMQKLTNIITTEDIVTVVTMVTNVDFPPKESSL.

The N-terminal stretch at 1–20 (MGAATKLAFAVFLISCSSAG) is a signal peptide. Over 21-136 (SILGRSETKE…TSNPVTTKPP (116 aa)) the chain is Extracellular. 5 cysteine pairs are disulfide-bonded: C31–C61, C51–C79, C86–C105, C92–C104, and C106–C111. Residues N46, N67, and N88 are each glycosylated (N-linked (GlcNAc...) asparagine). Residues 137-162 (LFNTLLYSLVPIMVVAVIVLFSFWMY) traverse the membrane as a helical segment. Residues 163–514 (RHHKLAYPPV…VDFPPKESSL (352 aa)) lie on the Cytoplasmic side of the membrane. The Protein kinase domain maps to 193–486 (LQLLEVKARG…EERIIQMQKL (294 aa)). ATP-binding positions include 199–207 (KARGRFGCV) and K220. The Proton acceptor role is filled by D323.

It belongs to the protein kinase superfamily. TKL Ser/Thr protein kinase family. TGFB receptor subfamily.

The protein localises to the cell membrane. It catalyses the reaction L-threonyl-[receptor-protein] + ATP = O-phospho-L-threonyl-[receptor-protein] + ADP + H(+). It carries out the reaction L-seryl-[receptor-protein] + ATP = O-phospho-L-seryl-[receptor-protein] + ADP + H(+). Receptor for activin A, activin B and inhibin A. Involved in transmembrane signaling. In Xenopus laevis (African clawed frog), this protein is Activin receptor type-2A (acvr2a).